Here is a 359-residue protein sequence, read N- to C-terminus: Ornithine cyclodeaminase (359 aa).

L-ornithine-binding residues include Arg53 and Lys77. NAD(+)-binding positions include Thr92, Arg120, 147 to 148 (AQ), Asp169, Thr209, 232 to 235 (VGGD), Lys239, and Ser300. An L-ornithine-binding site is contributed by Arg120. Residue Asp235 coordinates L-ornithine. Asp235 serves as the catalytic Proton donor/acceptor. Val301 contacts L-ornithine.

This sequence belongs to the ornithine cyclodeaminase/mu-crystallin family. NAD(+) serves as cofactor.

It carries out the reaction L-ornithine = L-proline + NH4(+). Its pathway is amino-acid biosynthesis; L-proline biosynthesis; L-proline from L-ornithine: step 1/1. Catalyzes the conversion of L-ornithine into L-proline with release of ammonia. The chain is Ornithine cyclodeaminase from Brucella abortus biovar 1 (strain 9-941).